We begin with the raw amino-acid sequence, 1074 residues long: Semaphorin-5A (1074 aa).

Positions 1 to 22 (MKGACILAWLFSSLGVWRLARP) are cleaved as a signal peptide. One can recognise a Sema domain in the interval 35 to 484 (HPVVSYKEIG…LQEHVVKIPL (450 aa)). 2 cysteine pairs are disulfide-bonded: cysteine 104/cysteine 114 and cysteine 131/cysteine 140. N-linked (GlcNAc...) asparagine glycosylation is found at asparagine 147, asparagine 168, asparagine 227, and asparagine 277. Intrachain disulfides connect cysteine 254–cysteine 357 and cysteine 278–cysteine 320. 2 N-linked (GlcNAc...) asparagine glycosylation sites follow: asparagine 323 and asparagine 367. In terms of domain architecture, PSI spans 486–533 (RCHFHQTRGACIGAQDPYCGWDAVMKKCTSLEESLSMTQWDQSVPTCP). Residues asparagine 536 and asparagine 591 are each glycosylated (N-linked (GlcNAc...) asparagine). TSP type-1 domains follow at residues 540–593 (DGSF…TNCS), 595–651 (NGGW…LLCP), and 653–702 (HVFW…NACP). Cystine bridges form between cysteine 607/cysteine 644, cysteine 611/cysteine 650, cysteine 622/cysteine 634, cysteine 665/cysteine 696, cysteine 669/cysteine 701, and cysteine 680/cysteine 686. A glycan (N-linked (GlcNAc...) asparagine) is linked at asparagine 717. TSP type-1 domains follow at residues 784 to 839 (NGAW…LPCP), 841 to 896 (DGVW…QTCP), and 897 to 944 (ENWS…VFDS). Intrachain disulfides connect cysteine 796-cysteine 833, cysteine 800-cysteine 838, cysteine 811-cysteine 823, cysteine 853-cysteine 890, cysteine 857-cysteine 895, and cysteine 868-cysteine 880. 2 N-linked (GlcNAc...) asparagine glycosylation sites follow: asparagine 898 and asparagine 933. Residues 969-989 (FHMMAVGLSSSILGCLLTLLV) traverse the membrane as a helical segment. N-linked (GlcNAc...) asparagine glycosylation is present at asparagine 1015.

In terms of assembly, binds PLXNB3.

It is found in the membrane. In terms of biological role, bifunctional axonal guidance cue regulated by sulfated proteoglycans; attractive effects result from interactions with heparan sulfate proteoglycans (HSPGs), while the inhibitory effects depend on interactions with chondroitin sulfate proteoglycans (CSPGs). Ligand for receptor PLXNB3. In glioma cells, SEMA5A stimulation of PLXNB3 results in the disassembly of F-actin stress fibers, disruption of focal adhesions and cellular collapse as well as inhibition of cell migration and invasion through ARHGDIA-mediated inactivation of RAC1. May promote angiogenesis by increasing endothelial cell proliferation and migration and inhibiting apoptosis. This Rattus norvegicus (Rat) protein is Semaphorin-5A (Sema5a).